The following is a 325-amino-acid chain: Undecaprenyl-phosphate 4-deoxy-4-formamido-L-arabinose transferase (325 aa).

2 consecutive transmembrane segments (helical) span residues 234-254 (LLSV…LLLI) and 269-289 (VFML…GMGL).

The protein belongs to the glycosyltransferase 2 family.

The protein resides in the cell inner membrane. It catalyses the reaction UDP-4-deoxy-4-formamido-beta-L-arabinose + di-trans,octa-cis-undecaprenyl phosphate = 4-deoxy-4-formamido-alpha-L-arabinopyranosyl di-trans,octa-cis-undecaprenyl phosphate + UDP. It functions in the pathway glycolipid biosynthesis; 4-amino-4-deoxy-alpha-L-arabinose undecaprenyl phosphate biosynthesis; 4-amino-4-deoxy-alpha-L-arabinose undecaprenyl phosphate from UDP-4-deoxy-4-formamido-beta-L-arabinose and undecaprenyl phosphate: step 1/2. Its pathway is bacterial outer membrane biogenesis; lipopolysaccharide biosynthesis. In terms of biological role, catalyzes the transfer of 4-deoxy-4-formamido-L-arabinose from UDP to undecaprenyl phosphate. The modified arabinose is attached to lipid A and is required for resistance to polymyxin and cationic antimicrobial peptides. The polypeptide is Undecaprenyl-phosphate 4-deoxy-4-formamido-L-arabinose transferase (Erwinia tasmaniensis (strain DSM 17950 / CFBP 7177 / CIP 109463 / NCPPB 4357 / Et1/99)).